Here is a 445-residue protein sequence, read N- to C-terminus: ATP synthase subunit b-delta (445 aa).

The interval 1 to 168 (MSTFIGQLVG…PAAAEVERPV (168 aa)) is ATP synthase subunit b. The chain crosses the membrane as a helical span at residues 4 to 24 (FIGQLVGFAAIVFLVWRYVVP). The interval 169–445 (AAKMRSASRR…LTAAEAQLPD (277 aa)) is ATP synthase subunit delta.

This sequence in the N-terminal section; belongs to the ATPase B chain family. The protein in the C-terminal section; belongs to the ATPase delta chain family. As to quaternary structure, F-type ATPases have 2 components, F(1) - the catalytic core - and F(0) - the membrane proton channel. F(1) has five subunits: alpha(3), beta(3), gamma(1), delta(1), epsilon(1). F(0) has three main subunits: a(1), b(2) and c(10-14). The alpha and beta chains form an alternating ring which encloses part of the gamma chain. F(1) is attached to F(0) by a central stalk formed by the gamma and epsilon chains, while a peripheral stalk is formed by the delta and b chains.

The protein resides in the cell membrane. Functionally, f(1)F(0) ATP synthase produces ATP from ADP in the presence of a proton or sodium gradient. F-type ATPases consist of two structural domains, F(1) containing the extramembraneous catalytic core and F(0) containing the membrane proton channel, linked together by a central stalk and a peripheral stalk. During catalysis, ATP synthesis in the catalytic domain of F(1) is coupled via a rotary mechanism of the central stalk subunits to proton translocation. Its function is as follows. This fusion protein includes a component of the F(0) channel (subunit b) and of the F(1) subunit (subunit delta). Two copies of subunit b and one of delta together form the peripheral 'stator' stalk which links F(1) to F(0). This is ATP synthase subunit b-delta (atpFH) from Mycobacterium ulcerans (strain Agy99).